A 1198-amino-acid polypeptide reads, in one-letter code: Tetratricopeptide repeat protein 17 (1198 aa).

The TPR 1 repeat unit spans residues 295 to 328 (FTSYYTLGNIYAMLGEYNHSVLCYDHALQAKPGF). The stretch at 340 to 382 (CQQKLEQKLEAQHRSLQRTLNELKEYQKQHDHYLRQQEILEKH) forms a coiled coil. TPR repeat units lie at residues 619–652 (WLILNEAGLYWRAVGNSTFAIACLQRALNLAPVQ) and 689–722 (PLTFLSLGNAYLALKNVSGALEAFRQALKLTTRC). Disordered regions lie at residues 771–825 (PQSL…KSEE) and 903–924 (KKPKGDHKKPPGKKVEASQAEN). Residues 903 to 914 (KKPKGDHKKPPG) are compositionally biased toward basic residues. 3 TPR repeats span residues 1071-1105 (SWVLSSMAALYWRVKGQGKKAIDCLRQALHYAPHQ), 1108-1141 (DVPLISLANILHNAKLWNDAVVVATMAVEIAPHF), and 1142-1175 (AVNHFTLGNVYVAMEEFEKALVWYESTLKLQPEF).

It belongs to the TTC17 family. In terms of assembly, interacts with CATIP. In terms of tissue distribution, expressed in germ cells as well as in somatic cells of the testis (at protein level). Ubiquitous.

It localises to the cytoplasm. The protein resides in the cell membrane. It is found in the cytoskeleton. Its function is as follows. Plays a role in primary ciliogenesis by modulating actin polymerization. This is Tetratricopeptide repeat protein 17 (Ttc17) from Rattus norvegicus (Rat).